Consider the following 79-residue polypeptide: Acyl carrier protein (79 aa).

The Carrier domain occupies 2 to 77 (SDVLERVRKI…DAVKFIQERL (76 aa)). Position 37 is an O-(pantetheine 4'-phosphoryl)serine (Ser37).

The protein belongs to the acyl carrier protein (ACP) family. In terms of processing, 4'-phosphopantetheine is transferred from CoA to a specific serine of apo-ACP by AcpS. This modification is essential for activity because fatty acids are bound in thioester linkage to the sulfhydryl of the prosthetic group.

It is found in the cytoplasm. The protein operates within lipid metabolism; fatty acid biosynthesis. In terms of biological role, carrier of the growing fatty acid chain in fatty acid biosynthesis. The protein is Acyl carrier protein of Phenylobacterium zucineum (strain HLK1).